The sequence spans 792 residues: Probable G-protein coupled receptor 156 (792 aa).

The Extracellular portion of the chain corresponds to 1–49; that stretch reads MEPEINCSEFCDSFPGQELDRRPLHDLCKTTITDSQHGSADISPLSPAL. N-linked (GlcNAc...) asparagine glycosylation occurs at Asn6. A helical membrane pass occupies residues 50 to 70; the sequence is LGVIWTFLSCGLLLVLFFLAF. At 71–86 the chain is on the cytoplasmic side; sequence TIRCRKNRIVKMSSPN. A helical membrane pass occupies residues 87–107; the sequence is LNIVTLLGSCLTYSSAYLFGI. The Extracellular portion of the chain corresponds to 108–118; it reads QDALVGSSVEA. A helical membrane pass occupies residues 119 to 139; that stretch reads LIQTRLSLLCIGTTLVFGPIL. Residues 140–164 are Cytoplasmic-facing; sequence GKSWRLYKVFTQRVPDKRVIIKDLQ. Residues 165–185 traverse the membrane as a helical segment; sequence LLGLVAALVVADVILLVTWVL. At 186–222 the chain is on the extracellular side; the sequence is TDPIQCLQILGVSMKVTGRDVSCSLTNTHFCASRYSD. Residues 223-243 form a helical membrane-spanning segment; that stretch reads VWIALVLGCKGLLLLYGAYLA. The Cytoplasmic segment spans residues 244–257; sequence GLTNHVSSPPVNQS. The helical transmembrane segment at 258-278 threads the bilayer; sequence LTIMVGVNLLLLTAGLLFVVT. The Extracellular portion of the chain corresponds to 279 to 287; that stretch reads RYLHSWPNL. A helical membrane pass occupies residues 288 to 308; sequence VFGLTSGGIFVCTTTVNCCVF. The Cytoplasmic segment spans residues 309-792; the sequence is LPQLRQRKAF…FKDDLKPTLV (484 aa). Residues 354-390 adopt a coiled-coil conformation; that stretch reads EXSCMERLLTEKNAVIESLQEQVSNAKEKLVKLMSAE. Disordered stretches follow at residues 407 to 457, 469 to 516, and 538 to 704; these read GGPA…KYDM, GCSQ…EVLP, and DLGT…QRQP. Residues 422–434 are compositionally biased toward low complexity; the sequence is AAAEDSLPASAAS. Basic and acidic residues-rich tracts occupy residues 443-457 and 474-486; these read SRRD…KYDM and PKAE…ERGN. Over residues 554-567 the composition is skewed to polar residues; that stretch reads PWKSNTSGSPQKLS. Residues 578–589 are compositionally biased toward basic residues; the sequence is VRRRRAAQRARS. The span at 602 to 619 shows a compositional bias: polar residues; that stretch reads QANNTVSGSQNGLIVQNR. The span at 620–635 shows a compositional bias: basic and acidic residues; the sequence is DSPRLDHHNARSKEPR. Positions 675–704 are enriched in low complexity; it reads PRQPSASAPAQSSTAPCLSSXPALPRQRQP.

Belongs to the G-protein coupled receptor 3 family. GABA-B receptor subfamily. As to expression, widely expressed throughout the brain and is particularly dense in the olfactory tubercles, islands of Calleja, nucleus accumbens, piriform cortex and all fields of the hippocampus.

Its subcellular location is the cell membrane. Its function is as follows. Orphan G-protein coupled receptor involved in the regulation of hair cell orientation in mechanosensory organs of the inner ear. It is required to trigger a 180 degree reversal in hair cell orientation, creating a virtual line of polarity reversal (LPR) across which stereociliary bundles are arranged in opposite orientations. This chain is Probable G-protein coupled receptor 156 (Gpr156), found in Rattus norvegicus (Rat).